Consider the following 131-residue polypeptide: D-ribose pyranase (131 aa).

Histidine 20 functions as the Proton donor in the catalytic mechanism. Substrate is bound by residues aspartate 28, histidine 98, and 120–122 (YAN).

It belongs to the RbsD / FucU family. RbsD subfamily. In terms of assembly, homodecamer.

It localises to the cytoplasm. The catalysed reaction is beta-D-ribopyranose = beta-D-ribofuranose. It functions in the pathway carbohydrate metabolism; D-ribose degradation; D-ribose 5-phosphate from beta-D-ribopyranose: step 1/2. In terms of biological role, catalyzes the interconversion of beta-pyran and beta-furan forms of D-ribose. This is D-ribose pyranase from Clostridium tetani (strain Massachusetts / E88).